The primary structure comprises 336 residues: MSLKAIATTLGISVTTVSRALGGFSDVAASTRERVEAEARRRGYRPNTQARRLKTGKTDAIGLVYPENDVPFNSGVFMDMVSCISRELAYHDIDLLLIADDEHADCHSYMRLVESRRIDALIIAHTLDDDPRITHLHKAGIPFLALGRVPQGLPCAWFDFDNHAGTWQATQKLIALGHKSIALLSENTSHSYVIARRQGWLDALHEHGLKDPLLRLVSPTRRAGYLAVMELMSLPAPPTAIITDNDLSGDGAAMALQLRGRLSGKEAVSLVVYDGLPQDSIIELDVAAVIQSTRSLVGRQISDMVYQIINGASPESLQITWTPIFYPGSTVHSPSF.

Residues 2–55 form the HTH lacI-type domain; it reads SLKAIATTLGISVTTVSRALGGFSDVAASTRERVEAEARRRGYRPNTQARRLKT. Residues 3 to 22 constitute a DNA-binding region (H-T-H motif); sequence LKAIATTLGISVTTVSRALG.

As to quaternary structure, homodimer.

Its function is as follows. Repressor that negatively controls the expression of the raffinose (raf) operon by binding to the raf operator (rafO) DNA. Acts by binding to two operator sites, O1 and 02, which flank the -35 raf promoter box. RafR bound to 02 alone results in 45 % repression of transcription, whereas RafR bound to O1 leads to only 6% repression. The protein is HTH-type transcriptional regulator RafR of Escherichia coli.